We begin with the raw amino-acid sequence, 132 residues long: Protein KRTCAP2 homolog (132 aa).

Helical transmembrane passes span 1 to 21, 35 to 55, 69 to 89, and 92 to 109; these read MAVP…LIFS, MATV…LTAV, AKLF…CGMV, and VCAT…YYIN.

This sequence belongs to the KRTCAP2 family. As to quaternary structure, component of the oligosaccharyltransferase (OST) complex.

The protein localises to the membrane. Its function is as follows. Subunit of the oligosaccharyl transferase (OST) complex that catalyzes the initial transfer of a defined glycan (Glc(3)Man(9)GlcNAc(2) in eukaryotes) from the lipid carrier dolichol-pyrophosphate to an asparagine residue within an Asn-X-Ser/Thr consensus motif in nascent polypeptide chains, the first step in protein N-glycosylation. N-glycosylation occurs cotranslationally and the complex associates with the Sec61 complex at the channel-forming translocon complex that mediates protein translocation across the endoplasmic reticulum (ER). All subunits are required for a maximal enzyme activity. This is Protein KRTCAP2 homolog from Aedes aegypti (Yellowfever mosquito).